The primary structure comprises 493 residues: Sorting nexin-4 (493 aa).

The interval 1-77 (MAVIDQDNFS…ILDCTVSDPH (77 aa)) is disordered. Residues 7–28 (DNFSNISWHSEQNAESAASTAQ) show a composition bias toward polar residues. Residues 56-65 (MEHDELDHSG) show a composition bias toward basic and acidic residues. The PX domain maps to 68 to 190 (ILDCTVSDPH…AFLESPDWNA (123 aa)). 4 residues coordinate a 1,2-diacyl-sn-glycero-3-phospho-(1D-myo-inositol-3-phosphate): R111, T113, K137, and R156. Coiled coils occupy residues 248–292 (EIKE…QKLI), 338–363 (SGTLKNLLKAREQKQLDYEQLTEYLN), and 405–442 (EQARRDRQRKLELRIEELTREVEVARNESESFAEQVSR).

Belongs to the sorting nexin family.

The protein resides in the cytoplasm. The protein localises to the membrane. It localises to the endosome membrane. Its function is as follows. Sorting nexin, involved in the separation or division of vacuoles throughout the entire life cycle of the cells. Involved in retrieval of late-Golgi SNAREs from post-Golgi endosomes to the trans-Golgi network, for cytoplasm to vacuole transport (Cvt), and autophagy of large cargos including mitophagy, pexophagy and glycophagy. In Neurospora crassa (strain ATCC 24698 / 74-OR23-1A / CBS 708.71 / DSM 1257 / FGSC 987), this protein is Sorting nexin-4 (vsp-5).